The following is a 219-amino-acid chain: Response regulator ArlR (219 aa).

The Response regulatory domain occupies 3–116; it reads NILIVEDEQN…ELLARIRAVL (114 aa). Residue D52 is modified to 4-aspartylphosphate. Positions 122–219 form a DNA-binding region, ompR/PhoB-type; it reads KDVLDINGII…TVRGVGYVIR (98 aa).

Post-translationally, phosphorylated by ArlS.

Its subcellular location is the cytoplasm. In terms of biological role, member of the two-component regulatory system ArlS/ArlR. The protein is Response regulator ArlR (arlR) of Staphylococcus epidermidis (strain ATCC 35984 / DSM 28319 / BCRC 17069 / CCUG 31568 / BM 3577 / RP62A).